The following is a 118-amino-acid chain: uncharacterized protein (118 aa).

Residues isoleucine 21–asparagine 38 traverse the membrane as a helical segment.

It is found in the membrane. This is an uncharacterized protein from Dictyostelium discoideum (Social amoeba).